Here is a 467-residue protein sequence, read N- to C-terminus: Translation initiation factor eIF2B subunit delta (467 aa).

Residues 1–106 form a disordered region; it reads MGFSAEQAKK…QNPQNSPETD (106 aa). Ser16, Ser19, Ser21, and Ser23 each carry phosphoserine. A compositionally biased stretch (polar residues) spans 16 to 37; the sequence is SPVSESSSVGGTSPATASSVVS. Thr27 carries the phosphothreonine modification. 2 positions are modified to phosphoserine: Ser28 and Ser37. Positions 51–61 are enriched in basic residues; that stretch reads LKKARKQASRR. The span at 84 to 102 shows a compositional bias: low complexity; that stretch reads PNKNSNQQKKASKQNPQNS.

This sequence belongs to the eIF-2B alpha/beta/delta subunits family. In terms of assembly, component of the translation initiation factor 2B (eIF2B) complex which is a heterodecamer of two sets of five different subunits: alpha, beta, gamma, delta and epsilon. Subunits alpha, beta and delta comprise a regulatory subcomplex and subunits epsilon and gamma comprise a catalytic subcomplex. Within the complex, the hexameric regulatory complex resides at the center, with the two heterodimeric catalytic subcomplexes bound on opposite sides.

The protein resides in the cytoplasm. The protein localises to the cytosol. Its function is as follows. Acts as a component of the translation initiation factor 2B (eIF2B) complex, which catalyzes the exchange of GDP for GTP on the eukaryotic initiation factor 2 (eIF2) complex gamma subunit. Its guanine nucleotide exchange factor activity is repressed when bound to eIF2 complex phosphorylated on the alpha subunit, thereby limiting the amount of methionyl-initiator methionine tRNA available to the ribosome and consequently global translation is repressed. The polypeptide is Translation initiation factor eIF2B subunit delta (tif224) (Schizosaccharomyces pombe (strain 972 / ATCC 24843) (Fission yeast)).